The primary structure comprises 281 residues: Glyoxalase 1 (281 aa).

VOC domains are found at residues 4–127 (RALH…IGKA) and 132–251 (KVLR…FVGD).

The protein belongs to the glyoxalase I family. Expressed in the following tissues in both larvae and adults: pharynx, pharyngeal-intestinal valve, intestine, anal sphincter, vulval muscle, seam cells and the nervous system.

Functionally, thought to act as a glyoxalase. May remove methylglyoxal from mitochondrial proteins. Has roles in reducing oxidative stress and increasing lifespan. The protein is Glyoxalase 1 (glod-4) of Caenorhabditis elegans.